A 199-amino-acid chain; its full sequence is dCTP deaminase, dUMP-forming (199 aa).

DCTP contacts are provided by residues 101-106 (KSSLGR), D119, 127-129 (TLE), Q148, Y162, and Q174. E129 serves as the catalytic Proton donor/acceptor. The tract at residues 163–199 (GSAAAGSKYQGQRGPTPSRSYLNFPLPSDAVDAVESR) is disordered. The segment covering 171–183 (YQGQRGPTPSRSY) has biased composition (polar residues).

The protein belongs to the dCTP deaminase family. As to quaternary structure, homotrimer.

The catalysed reaction is dCTP + 2 H2O = dUMP + NH4(+) + diphosphate. The protein operates within pyrimidine metabolism; dUMP biosynthesis; dUMP from dCTP: step 1/1. Bifunctional enzyme that catalyzes both the deamination of dCTP to dUTP and the hydrolysis of dUTP to dUMP without releasing the toxic dUTP intermediate. This Nocardia farcinica (strain IFM 10152) protein is dCTP deaminase, dUMP-forming.